The primary structure comprises 481 residues: Phosphatidylinositol 4-kinase type 2-beta (481 aa).

The segment covering 1 to 11 (MEDPSEPDRLA) has biased composition (basic and acidic residues). The tract at residues 1-82 (MEDPSEPDRL…VSRSSSAELD (82 aa)) is disordered. Phosphoserine occurs at positions 12, 17, and 45. Acidic residues predominate over residues 53 to 64 (AGEEGEAGDEEL). Positions 120–451 (GIFPERISQG…VQIPCVIVER (332 aa)) constitute a PI3K/PI4K catalytic domain. The interval 126–132 (ISQGSSG) is G-loop. Positions 133 and 148 each coordinate ATP. The important for substrate binding stretch occupies residues 153–155 (EPY). Residues 161 to 174 (KWTKYVHKVCCPCC) form an important for interaction with membranes region. ATP contacts are provided by residues 257–260 (QLFV) and 271–272 (RK). The important for interaction with membranes stretch occupies residues 264 to 272 (KEAEYWLRK). Positions 301 to 309 (RNTDRGNDN) are catalytic loop. The interval 342–362 (AIDNGLAFPFKHPDEWRAYPF) is activation loop. D344 is an ATP binding site. Residues 357–366 (WRAYPFHWAW) are important for interaction with membranes.

Belongs to the PI3/PI4-kinase family. Type II PI4K subfamily. As to expression, widely expressed.

The protein localises to the cytoplasm. The protein resides in the cytosol. Its subcellular location is the golgi apparatus membrane. It is found in the endoplasmic reticulum membrane. It localises to the cell membrane. The protein localises to the early endosome membrane. It carries out the reaction a 1,2-diacyl-sn-glycero-3-phospho-(1D-myo-inositol) + ATP = a 1,2-diacyl-sn-glycero-3-phospho-(1D-myo-inositol 4-phosphate) + ADP + H(+). Inhibited by phenylarsine oxide and adenosine. Activation through membrane association is stimulated by active RAC1. Together with PI4K2A and the type III PI4Ks (PIK4CA and PIK4CB) it contributes to the overall PI4-kinase activity of the cell. This contribution may be especially significant in plasma membrane, endosomal and Golgi compartments. The phosphorylation of phosphatidylinositol (PI) to PI4P is the first committed step in the generation of phosphatidylinositol 4,5-bisphosphate (PIP2), a precursor of the second messenger inositol 1,4,5-trisphosphate (InsP3). Contributes to the production of InsP3 in stimulated cells and is likely to be involved in the regulation of vesicular trafficking. The chain is Phosphatidylinositol 4-kinase type 2-beta (PI4K2B) from Homo sapiens (Human).